The following is a 600-amino-acid chain: Autophagy-related protein 22-2 (600 aa).

The segment at 1–30 (MAFASPPASPPDEDGQARAPRYPGEDTTPT) is disordered. The next 4 membrane-spanning stretches (helical) occupy residues 41–61 (YGIA…PLTL), 117–137 (SFAM…LISF), 149–168 (TLLV…FVFI), and 186–206 (CLGS…ASDP). Positions 234 to 257 (SFDGDEPTHRPPTGLGLGGATGTS) are disordered. Helical transmembrane passes span 271–291 (GVGL…LLLF), 304–324 (TLPL…FTMV), 378–398 (VIVF…VSGT), and 414–434 (VALL…LWPI). Asn-444 is a glycosylation site (N-linked (GlcNAc...) asparagine). A run of 4 helical transmembrane segments spans residues 449–469 (VCIA…IPLF), 484–506 (YPLA…SFFG), 526–546 (KGSS…TGQV), and 549–569 (GFFF…MVDA).

It belongs to the ATG22 family.

It is found in the vacuole membrane. In terms of biological role, vacuolar effluxer which mediate the efflux of amino acids resulting from autophagic degradation. The release of autophagic amino acids allows the maintenance of protein synthesis and viability during nitrogen starvation. The protein is Autophagy-related protein 22-2 (atg22-2) of Aspergillus niger (strain ATCC MYA-4892 / CBS 513.88 / FGSC A1513).